A 133-amino-acid polypeptide reads, in one-letter code: Ribonuclease VapC10 (133 aa).

Residues I2 to Q119 enclose the PINc domain. Mg(2+)-binding residues include D5 and D92.

Belongs to the PINc/VapC protein family. The cofactor is Mg(2+).

In terms of biological role, toxic component of a type II toxin-antitoxin (TA) system. An RNase. The cognate antitoxin is VapB10. The sequence is that of Ribonuclease VapC10 from Mycobacterium tuberculosis (strain CDC 1551 / Oshkosh).